A 257-amino-acid chain; its full sequence is Thiazole synthase (257 aa).

The Schiff-base intermediate with DXP role is filled by Lys95. Residues Gly156, 182–183, and 204–205 contribute to the 1-deoxy-D-xylulose 5-phosphate site; these read AG and NT.

The protein belongs to the ThiG family. Homotetramer. Forms heterodimers with either ThiH or ThiS.

It localises to the cytoplasm. It catalyses the reaction [ThiS sulfur-carrier protein]-C-terminal-Gly-aminoethanethioate + 2-iminoacetate + 1-deoxy-D-xylulose 5-phosphate = [ThiS sulfur-carrier protein]-C-terminal Gly-Gly + 2-[(2R,5Z)-2-carboxy-4-methylthiazol-5(2H)-ylidene]ethyl phosphate + 2 H2O + H(+). The protein operates within cofactor biosynthesis; thiamine diphosphate biosynthesis. In terms of biological role, catalyzes the rearrangement of 1-deoxy-D-xylulose 5-phosphate (DXP) to produce the thiazole phosphate moiety of thiamine. Sulfur is provided by the thiocarboxylate moiety of the carrier protein ThiS. In vitro, sulfur can be provided by H(2)S. The protein is Thiazole synthase of Vibrio vulnificus (strain CMCP6).